The sequence spans 269 residues: Chymotrypsin-like elastase family member 2A (269 aa).

An N-terminal signal peptide occupies residues 1-16 (MIRALLLSTLVAGALS). The propeptide at 17–28 (CGVPTYPPQLSR) is activation peptide. One can recognise a Peptidase S1 domain in the interval 29-267 (VVGGEDARPN…YNDWISSVIE (239 aa)). A disulfide bond links C58 and C74. Active-site charge relay system residues include H73 and D121. 3 cysteine pairs are disulfide-bonded: C155/C222, C186/C202, and C212/C243. The active-site Charge relay system is S216.

Belongs to the peptidase S1 family. Elastase subfamily. As to quaternary structure, interacts with CPA1. Interacts with SERPINA1. In terms of tissue distribution, pancreas.

The protein localises to the secreted. The catalysed reaction is Preferential cleavage: Leu-|-Xaa, Met-|-Xaa and Phe-|-Xaa. Hydrolyzes elastin.. In terms of biological role, elastase that enhances insulin signaling and might have a physiologic role in cellular glucose metabolism. Circulates in plasma and reduces platelet hyperactivation, triggers both insulin secretion and degradation, and increases insulin sensitivity. The polypeptide is Chymotrypsin-like elastase family member 2A (CELA2A) (Bos taurus (Bovine)).